A 216-amino-acid chain; its full sequence is MKYGIVGYSGRMGQEIQKVFSEKGHELVLKVDVNGVEELGSPDVVVDFSSPEALPKTVELCKKYRAGLVLGTTALKEEHLQMLRELSKEVPVVQAYNFSIGINVLKRFLSELVKVLEDWDVEIVETHHRFKKDAPSGTAILLESALGKSVPIHSLRVGGVPGDHVVVFGNIGETIEIKHRAISRTVFAIGALKAAEFLVGKDPGMYSFEEVIFGGE.

NAD(+) is bound by residues 7–12 (GYSGRM), 71–73 (GTT), and 95–98 (AYNF). His-127 functions as the Proton donor/acceptor in the catalytic mechanism. His-128 is a (S)-2,3,4,5-tetrahydrodipicolinate binding site. The Proton donor role is filled by Lys-131. A (S)-2,3,4,5-tetrahydrodipicolinate-binding site is contributed by 137–138 (GT).

The protein belongs to the DapB family.

Its subcellular location is the cytoplasm. The catalysed reaction is (S)-2,3,4,5-tetrahydrodipicolinate + NAD(+) + H2O = (2S,4S)-4-hydroxy-2,3,4,5-tetrahydrodipicolinate + NADH + H(+). It catalyses the reaction (S)-2,3,4,5-tetrahydrodipicolinate + NADP(+) + H2O = (2S,4S)-4-hydroxy-2,3,4,5-tetrahydrodipicolinate + NADPH + H(+). Its pathway is amino-acid biosynthesis; L-lysine biosynthesis via DAP pathway; (S)-tetrahydrodipicolinate from L-aspartate: step 4/4. Its function is as follows. Catalyzes the conversion of 4-hydroxy-tetrahydrodipicolinate (HTPA) to tetrahydrodipicolinate. The sequence is that of 4-hydroxy-tetrahydrodipicolinate reductase from Thermotoga sp. (strain RQ2).